The following is a 658-amino-acid chain: Integrator complex subunit 9 (658 aa).

The tract at residues 550 to 574 (KHVLQLPPKPPQPPTSKKRKRVSDD) is disordered. The Nuclear localization signal signature appears at 566 to 570 (KKRKR).

It belongs to the metallo-beta-lactamase superfamily. RNA-metabolizing metallo-beta-lactamase-like family. INTS9 subfamily. In terms of assembly, component of the Integrator complex, composed of core subunits INTS1, INTS2, INTS3, INTS4, INTS5, INTS6, INTS7, INTS8, INTS9/RC74, INTS10, INTS11/CPSF3L, INTS12, INTS13, INTS14 and INTS15. The core complex associates with protein phosphatase 2A subunits PPP2CA and PPP2R1A, to form the Integrator-PP2A (INTAC) complex. INTS9 is part of the RNA endonuclease subcomplex, composed of INTS4, INTS9, INTS11 and inositol hexakisphosphate (InsP6).

Its subcellular location is the nucleus. The protein resides in the cytoplasm. Component of the integrator complex, a multiprotein complex that terminates RNA polymerase II (Pol II) transcription in the promoter-proximal region of genes. The integrator complex provides a quality checkpoint during transcription elongation by driving premature transcription termination of transcripts that are unfavorably configured for transcriptional elongation: the complex terminates transcription by (1) catalyzing dephosphorylation of the C-terminal domain (CTD) of Pol II subunit POLR2A/RPB1 and SUPT5H/SPT5, (2) degrading the exiting nascent RNA transcript via endonuclease activity and (3) promoting the release of Pol II from bound DNA. The integrator complex is also involved in terminating the synthesis of non-coding Pol II transcripts, such as enhancer RNAs (eRNAs), small nuclear RNAs (snRNAs), telomerase RNAs and long non-coding RNAs (lncRNAs). The protein is Integrator complex subunit 9 (INTS9) of Gallus gallus (Chicken).